Here is a 527-residue protein sequence, read N- to C-terminus: Protein Lilipod (527 aa).

The Extracellular portion of the chain corresponds to 1-22 (MDEEEEEEVTDLKLQLFHNTVR). Residues 23 to 43 (EHIIFLLLIILLYSSSYVVVS) traverse the membrane as a helical segment. The Cytoplasmic portion of the chain corresponds to 44–65 (RFRRRDRDDLYSNDEDEVLVYR). The helical transmembrane segment at 66–86 (ISFWLCTFTLAVAEGAAMLLP) threads the bilayer. Residues 87-117 (VSIASNEVLLLYPNSYYVKWLNSSLIQGLWN) lie on the Extracellular side of the membrane. Residues 118-138 (HVFLFSNLSLFIFLPFVYLFS) traverse the membrane as a helical segment. The Cytoplasmic segment spans residues 139–160 (ESTGFVGNKKGILPRVYETFTV). Residues 161–181 (FMLMAIIVLVLTAVLSAVFGI) traverse the membrane as a helical segment. At 182–194 (EKLQFFWFLNLGS) the chain is on the extracellular side. A helical membrane pass occupies residues 195–215 (VHLPFLYSCVSFLGVMLMLIC). Over 216–341 (TPYGFVRLFG…LRTSSTFQRT (126 aa)) the chain is Cytoplasmic. Residues 342–362 (FVYPLAMLLLLFCTAVTILLV) form a helical membrane-spanning segment. Topologically, residues 363–395 (VQNTLELLIGIKALPLSTRQFALGISSLSKLGP) are extracellular. Residues 396-416 (FGAGLEVCLIFYLGATSVVGF) traverse the membrane as a helical segment. Residues 417-433 (YSMPFMRKVCPKRRQTS) are Cytoplasmic-facing. A helical membrane pass occupies residues 434-454 (LPQLMLNCGFMLVLSSALPLL). Topologically, residues 455–468 (SRIIGITNFDLLGD) are extracellular. A helical transmembrane segment spans residues 469–489 (FGAIEWLGNFQIVLLYNLVFG). At 490–527 (TTTALCLANKFTATVRRELRARLVENYVLFTNYISFIN) the chain is on the cytoplasmic side.

This sequence belongs to the LIMR family. As to expression, in the ovary, detected in germline stem cells and their progeny. Also detected in the somatic follicular epithelium.

It localises to the cell membrane. Functionally, required during oogenesis to promote self-renewal of germline stem cells, probably by enhancing BMP signaling activity. In Drosophila melanogaster (Fruit fly), this protein is Protein Lilipod.